We begin with the raw amino-acid sequence, 118 residues long: Large ribosomal subunit protein bL20 (118 aa).

Belongs to the bacterial ribosomal protein bL20 family.

In terms of biological role, binds directly to 23S ribosomal RNA and is necessary for the in vitro assembly process of the 50S ribosomal subunit. It is not involved in the protein synthesizing functions of that subunit. This is Large ribosomal subunit protein bL20 from Pelagibacter ubique (strain HTCC1062).